The chain runs to 330 residues: Fructose-1,6-bisphosphatase class 1 (330 aa).

4 residues coordinate Mg(2+): Glu84, Asp103, Leu105, and Asp106. Substrate contacts are provided by residues Asp106–Ser109, Asn196, and Lys262. Mg(2+) is bound at residue Glu268.

It belongs to the FBPase class 1 family. Homotetramer. Mg(2+) serves as cofactor.

It is found in the cytoplasm. It carries out the reaction beta-D-fructose 1,6-bisphosphate + H2O = beta-D-fructose 6-phosphate + phosphate. Its pathway is carbohydrate biosynthesis; gluconeogenesis. The sequence is that of Fructose-1,6-bisphosphatase class 1 from Shewanella putrefaciens (strain CN-32 / ATCC BAA-453).